Consider the following 156-residue polypeptide: MTQSQYSQCARDALAERIVDTKTRKHLTFEQINEGTGLSVAFTTAALLGQHPLPADAARVVAAKLDLDDDAVRLLQTIPVRGSIPGGVPTDPTIYRFYEIVQVYGSTLKALIHEQFGDGIISAINFKLDIKKVDDPDGGSRAVITLDGKYLPTKPF.

Catalysis depends on residues R96, E99, and S122.

The protein belongs to the cyanase family.

It carries out the reaction cyanate + hydrogencarbonate + 3 H(+) = NH4(+) + 2 CO2. Its function is as follows. Catalyzes the reaction of cyanate with bicarbonate to produce ammonia and carbon dioxide. The chain is Cyanate hydratase from Burkholderia thailandensis (strain ATCC 700388 / DSM 13276 / CCUG 48851 / CIP 106301 / E264).